A 479-amino-acid polypeptide reads, in one-letter code: Anaerobic nitric oxide reductase flavorubredoxin (479 aa).

Residues 30 to 210 (LRGSSYNSYL…PFSRLVTPKI (181 aa)) are zinc metallo-hydrolase. The Fe cation site is built by His79, Glu81, Asp83, His147, Asp166, and His227. The Flavodoxin-like domain occupies 254-393 (ITIFYDTMSN…LCREHGREIA (140 aa)). FMN-binding positions include 260–264 (TMSNN) and 342–369 (AFGS…EMSL). One can recognise a Rubredoxin-like domain in the interval 423-474 (GPRMQCSVCQWIYDPAKGEPMQDVAPGTPWSEVPDNFLCPECSLGKDVFDEL). Cys428, Cys431, Cys461, and Cys464 together coordinate Fe cation.

It in the N-terminal section; belongs to the zinc metallo-hydrolase group 3 family. As to quaternary structure, homotetramer. Requires Fe cation as cofactor. FMN is required as a cofactor.

It localises to the cytoplasm. Its pathway is nitrogen metabolism; nitric oxide reduction. Its function is as follows. Anaerobic nitric oxide reductase; uses NADH to detoxify nitric oxide (NO), protecting several 4Fe-4S NO-sensitive enzymes. Has at least 2 reductase partners, only one of which (NorW, flavorubredoxin reductase) has been identified. NO probably binds to the di-iron center; electrons enter from the NorW at rubredoxin and are transferred sequentially to the FMN center and the di-iron center. Also able to function as an aerobic oxygen reductase. The sequence is that of Anaerobic nitric oxide reductase flavorubredoxin from Escherichia coli (strain SMS-3-5 / SECEC).